The primary structure comprises 350 residues: Chlorophyll a/b light-harvesting protein PcbA (350 aa).

A run of 6 helical transmembrane segments spans residues 26 to 46 (LSAHIAQYALITFWAGGITLF), 62 to 82 (LILIPHLATLGWGIGSGGQVV), 87 to 107 (YFVIGVIHLVASAVFGAGALY), 214 to 234 (IAVVLLAGGFWHINQAPFPWA), 248 to 268 (LSASLAGLSMAGFAAAYFSAV), and 309 to 329 (LCNVHFFLAFFVLQGHLWHAL).

It belongs to the PsbB/PsbC family. IsiA/Pcb subfamily. In terms of assembly, the antenna complex consists of chlorophylls (a and b) and chlorophyll a/b binding proteins. Chlorophyll a serves as cofactor. Chlorophyll b is required as a cofactor.

Its subcellular location is the cellular thylakoid membrane. Its function is as follows. The antenna complex functions as a light receptor, it captures and delivers excitation energy to photosystems II and I. The Prochlorales pcb genes are not related to higher plant LHCs. This is Chlorophyll a/b light-harvesting protein PcbA (pcbA) from Prochlorothrix hollandica.